The following is a 353-amino-acid chain: Holliday junction branch migration complex subunit RuvB (353 aa).

The interval 4-185 (ADRLITATGG…FGIVQRLEFY (182 aa)) is large ATPase domain (RuvB-L). ATP-binding positions include isoleucine 24, arginine 25, glycine 66, lysine 69, threonine 70, threonine 71, 132 to 134 (EDF), arginine 175, tyrosine 185, and arginine 222. Threonine 70 is a binding site for Mg(2+). The segment at 186–256 (NIADLSTIVS…TADKALNLLD (71 aa)) is small ATPAse domain (RuvB-S). The tract at residues 259-353 (EHGFDHQDRR…DDFGDEPVDL (95 aa)) is head domain (RuvB-H). Positions 295, 314, and 319 each coordinate DNA.

Belongs to the RuvB family. In terms of assembly, homohexamer. Forms an RuvA(8)-RuvB(12)-Holliday junction (HJ) complex. HJ DNA is sandwiched between 2 RuvA tetramers; dsDNA enters through RuvA and exits via RuvB. An RuvB hexamer assembles on each DNA strand where it exits the tetramer. Each RuvB hexamer is contacted by two RuvA subunits (via domain III) on 2 adjacent RuvB subunits; this complex drives branch migration. In the full resolvosome a probable DNA-RuvA(4)-RuvB(12)-RuvC(2) complex forms which resolves the HJ.

It localises to the cytoplasm. The catalysed reaction is ATP + H2O = ADP + phosphate + H(+). Its function is as follows. The RuvA-RuvB-RuvC complex processes Holliday junction (HJ) DNA during genetic recombination and DNA repair, while the RuvA-RuvB complex plays an important role in the rescue of blocked DNA replication forks via replication fork reversal (RFR). RuvA specifically binds to HJ cruciform DNA, conferring on it an open structure. The RuvB hexamer acts as an ATP-dependent pump, pulling dsDNA into and through the RuvAB complex. RuvB forms 2 homohexamers on either side of HJ DNA bound by 1 or 2 RuvA tetramers; 4 subunits per hexamer contact DNA at a time. Coordinated motions by a converter formed by DNA-disengaged RuvB subunits stimulates ATP hydrolysis and nucleotide exchange. Immobilization of the converter enables RuvB to convert the ATP-contained energy into a lever motion, pulling 2 nucleotides of DNA out of the RuvA tetramer per ATP hydrolyzed, thus driving DNA branch migration. The RuvB motors rotate together with the DNA substrate, which together with the progressing nucleotide cycle form the mechanistic basis for DNA recombination by continuous HJ branch migration. Branch migration allows RuvC to scan DNA until it finds its consensus sequence, where it cleaves and resolves cruciform DNA. This chain is Holliday junction branch migration complex subunit RuvB, found in Pseudomonas syringae pv. syringae (strain B728a).